Consider the following 181-residue polypeptide: Glucose-1-phosphate adenylyltransferase large subunit 2 (181 aa).

It belongs to the bacterial/plant glucose-1-phosphate adenylyltransferase family. As to quaternary structure, heterotetramer. In terms of tissue distribution, leaves.

It is found in the plastid. Its subcellular location is the chloroplast. The protein localises to the amyloplast. It carries out the reaction alpha-D-glucose 1-phosphate + ATP + H(+) = ADP-alpha-D-glucose + diphosphate. Its pathway is glycan biosynthesis; starch biosynthesis. With respect to regulation, highly active without 3'phosphoglycerate, and is only slightly affected by the activator 3'phosphoglycerate and inhibitor orthophosphate. Its function is as follows. This protein plays a role in synthesis of starch. It catalyzes the synthesis of the activated glycosyl donor, ADP-glucose from Glc-1-P and ATP. This is Glucose-1-phosphate adenylyltransferase large subunit 2 from Hordeum vulgare (Barley).